We begin with the raw amino-acid sequence, 317 residues long: Glycine--tRNA ligase alpha subunit (317 aa).

This sequence belongs to the class-II aminoacyl-tRNA synthetase family. Tetramer of two alpha and two beta subunits.

It localises to the cytoplasm. It catalyses the reaction tRNA(Gly) + glycine + ATP = glycyl-tRNA(Gly) + AMP + diphosphate. In Acidovorax ebreus (strain TPSY) (Diaphorobacter sp. (strain TPSY)), this protein is Glycine--tRNA ligase alpha subunit.